Here is a 218-residue protein sequence, read N- to C-terminus: N-(5'-phosphoribosyl)anthranilate isomerase (218 aa).

Belongs to the TrpF family.

The enzyme catalyses N-(5-phospho-beta-D-ribosyl)anthranilate = 1-(2-carboxyphenylamino)-1-deoxy-D-ribulose 5-phosphate. It functions in the pathway amino-acid biosynthesis; L-tryptophan biosynthesis; L-tryptophan from chorismate: step 3/5. The protein is N-(5'-phosphoribosyl)anthranilate isomerase of Rhodopseudomonas palustris (strain BisB5).